The sequence spans 277 residues: Collectin-10 (277 aa).

The first 27 residues, 1–27 (MSRKKEQQLRKYGTLVVLFIFQVQIFG), serve as a signal peptide directing secretion. Positions 41-82 (THTILPGPKGDDGEKGDRGEVGKQGKVGPKGPKGNKGTVGDV) are disordered. Positions 49-63 (KGDDGEKGDRGEVGK) are enriched in basic and acidic residues. A Collagen-like domain is found at 56–115 (GDRGEVGKQGKVGPKGPKGNKGTVGDVGDQGMLGKIGPIGGKGDKGAKGISGVSGKKGKA). A compositionally biased stretch (low complexity) spans 64-79 (QGKVGPKGPKGNKGTV). The region spanning 155–271 (TDEKFYYIVK…CQVTIYFICE (117 aa)) is the C-type lectin domain. 2 disulfides stabilise this stretch: Cys-176-Cys-270 and Cys-248-Cys-262. Residue Asn-258 is glycosylated (N-linked (GlcNAc...) asparagine).

The protein belongs to the COLEC10/COLEC11 family. In terms of tissue distribution, widely expressed. Highly expressed in lung. Weakly expressed in larynx, syrinx and cranial air sac. Expressed throughout the lower gastrointestinal tract in increasing levels starting from a faint signal in duodenum and ending with relatively high signals in proctodeum, coprodeum and urodeum. In the upper part of the gastrointestinal tract, expressed in tongue, crop, and mucosa of the crop.

It is found in the secreted. It localises to the golgi apparatus. Its subcellular location is the cytoplasm. Its function is as follows. Lectin that binds to various sugars: galactose &gt; mannose = fucose &gt; N-acetylglucosamine &gt; N-acetylgalactosamine. Acts as a chemoattractant, probably involved in the regulation of cell migration. This is Collectin-10 (COLEC10) from Gallus gallus (Chicken).